The chain runs to 235 residues: Small ribosomal subunit protein uS3 (235 aa).

The region spanning V39–K107 is the KH type-2 domain.

This sequence belongs to the universal ribosomal protein uS3 family. In terms of assembly, part of the 30S ribosomal subunit. Forms a tight complex with proteins S10 and S14.

Binds the lower part of the 30S subunit head. Binds mRNA in the 70S ribosome, positioning it for translation. The sequence is that of Small ribosomal subunit protein uS3 from Actinobacillus pleuropneumoniae serotype 5b (strain L20).